A 275-amino-acid chain; its full sequence is NAD kinase (275 aa).

Asp-66 (proton acceptor) is an active-site residue. Residues 66 to 67 (DG), His-71, 135 to 136 (NE), Lys-146, Arg-163, Asp-165, and 176 to 181 (TAYAMS) contribute to the NAD(+) site.

The protein belongs to the NAD kinase family. A divalent metal cation is required as a cofactor.

It is found in the cytoplasm. It carries out the reaction NAD(+) + ATP = ADP + NADP(+) + H(+). In terms of biological role, involved in the regulation of the intracellular balance of NAD and NADP, and is a key enzyme in the biosynthesis of NADP. Catalyzes specifically the phosphorylation on 2'-hydroxyl of the adenosine moiety of NAD to yield NADP. This Methanosphaera stadtmanae (strain ATCC 43021 / DSM 3091 / JCM 11832 / MCB-3) protein is NAD kinase.